Reading from the N-terminus, the 978-residue chain is Translation initiation factor IF-2 (978 aa).

Disordered stretches follow at residues 107-129 (AEAPALETEQEVEAAPQVDNLEL) and 146-387 (QEEE…HRVQ). The span at 146-169 (QEEELSERRRQREEQEARSREASE) shows a compositional bias: basic and acidic residues. Low complexity predominate over residues 170–186 (KAAAVAAEAAEAAAAQA). The span at 215–259 (AEKEQHLAKEKGLAREKELAESKARAAEDVVRAADLGDRRRKAES) shows a compositional bias: basic and acidic residues. Low complexity-rich tracts occupy residues 295 to 326 (KPAAGAVPAKPAKPGAPGAPGAPAAGAAAGAG) and 349 to 361 (PTRGATAAPGAGR). Over residues 375–386 (GSSDRDRDDHRV) the composition is skewed to basic and acidic residues. A tr-type G domain is found at 478–647 (PRAPVVTVMG…LLQAEVLELK (170 aa)). The tract at residues 487–494 (GHVDHGKT) is G1. A GTP-binding site is contributed by 487-494 (GHVDHGKT). Residues 512–516 (GITQH) are G2. Residues 533 to 536 (DTPG) form a G3 region. GTP contacts are provided by residues 533–537 (DTPGH) and 587–590 (NKID). The segment at 587–590 (NKID) is G4. The G5 stretch occupies residues 623–625 (SAK).

This sequence belongs to the TRAFAC class translation factor GTPase superfamily. Classic translation factor GTPase family. IF-2 subfamily.

It localises to the cytoplasm. Functionally, one of the essential components for the initiation of protein synthesis. Protects formylmethionyl-tRNA from spontaneous hydrolysis and promotes its binding to the 30S ribosomal subunits. Also involved in the hydrolysis of GTP during the formation of the 70S ribosomal complex. The protein is Translation initiation factor IF-2 of Albidiferax ferrireducens (strain ATCC BAA-621 / DSM 15236 / T118) (Rhodoferax ferrireducens).